The sequence spans 336 residues: Fructokinase-2 (336 aa).

Belongs to the carbohydrate kinase PfkB family. Expressed in stem, sheaths, anthers, and panicles (at protein level).

It carries out the reaction D-fructose + ATP = D-fructose 6-phosphate + ADP + H(+). It participates in glycan biosynthesis; starch biosynthesis. With respect to regulation, strongly inhibited at high fructose concentration. Functionally, may play an important role in maintaining the flux of carbon towards starch formation in endosperm. May also be involved in a sugar-sensing pathway. The chain is Fructokinase-2 (FRK2) from Oryza sativa subsp. japonica (Rice).